The sequence spans 168 residues: Peptidyl-prolyl cis-trans isomerase-like 3 (168 aa).

The PPIase cyclophilin-type domain maps to 1–156; that stretch reads MSVTLHTNVG…SEIRMTGVTV (156 aa).

It belongs to the cyclophilin-type PPIase family. PPIL3 subfamily.

The catalysed reaction is [protein]-peptidylproline (omega=180) = [protein]-peptidylproline (omega=0). Functionally, PPIases accelerate the folding of proteins. It catalyzes the cis-trans isomerization of proline imidic peptide bonds in oligopeptides. This is Peptidyl-prolyl cis-trans isomerase-like 3 (CYP10) from Mycosarcoma maydis (Corn smut fungus).